Consider the following 311-residue polypeptide: Alpha/beta hydrolase domain-containing protein 17C (311 aa).

The segment at 48–67 (EAPASTAQQPPREEGSGEPA) is disordered. Residues S193, D258, and H287 each act as charge relay system in the active site.

The protein belongs to the AB hydrolase superfamily. ABHD17 family. In terms of processing, palmitoylated on cysteine residues located in a cysteine cluster at the N-terminus which promotes membrane localization.

The protein resides in the recycling endosome membrane. It localises to the cell projection. Its subcellular location is the dendritic spine. It is found in the postsynaptic density membrane. It carries out the reaction S-hexadecanoyl-L-cysteinyl-[protein] + H2O = L-cysteinyl-[protein] + hexadecanoate + H(+). Functionally, hydrolyzes fatty acids from S-acylated cysteine residues in proteins. Has depalmitoylating activity towards NRAS. The protein is Alpha/beta hydrolase domain-containing protein 17C of Xenopus laevis (African clawed frog).